A 474-amino-acid polypeptide reads, in one-letter code: Aspartyl/glutamyl-tRNA(Asn/Gln) amidotransferase subunit B (474 aa).

This sequence belongs to the GatB/GatE family. GatB subfamily. As to quaternary structure, heterotrimer of A, B and C subunits.

It catalyses the reaction L-glutamyl-tRNA(Gln) + L-glutamine + ATP + H2O = L-glutaminyl-tRNA(Gln) + L-glutamate + ADP + phosphate + H(+). It carries out the reaction L-aspartyl-tRNA(Asn) + L-glutamine + ATP + H2O = L-asparaginyl-tRNA(Asn) + L-glutamate + ADP + phosphate + 2 H(+). In terms of biological role, allows the formation of correctly charged Asn-tRNA(Asn) or Gln-tRNA(Gln) through the transamidation of misacylated Asp-tRNA(Asn) or Glu-tRNA(Gln) in organisms which lack either or both of asparaginyl-tRNA or glutaminyl-tRNA synthetases. The reaction takes place in the presence of glutamine and ATP through an activated phospho-Asp-tRNA(Asn) or phospho-Glu-tRNA(Gln). This Wolbachia sp. subsp. Brugia malayi (strain TRS) protein is Aspartyl/glutamyl-tRNA(Asn/Gln) amidotransferase subunit B.